The chain runs to 433 residues: Xylose isomerase (433 aa).

Catalysis depends on residues histidine 99 and aspartate 102. Mg(2+) contacts are provided by glutamate 230, glutamate 266, histidine 269, aspartate 294, aspartate 305, aspartate 307, and aspartate 337.

The protein belongs to the xylose isomerase family. Homotetramer. Mg(2+) serves as cofactor.

It localises to the cytoplasm. The catalysed reaction is alpha-D-xylose = alpha-D-xylulofuranose. The chain is Xylose isomerase from Cereibacter sphaeroides (strain ATCC 17023 / DSM 158 / JCM 6121 / CCUG 31486 / LMG 2827 / NBRC 12203 / NCIMB 8253 / ATH 2.4.1.) (Rhodobacter sphaeroides).